The following is a 279-amino-acid chain: Thymidylate synthase (279 aa).

Arg133–Arg134 contributes to the dUMP binding site. Cys154 serves as the catalytic Nucleophile. DUMP is bound by residues Arg178–Asp181, Asn189, and His219–Tyr221. Asp181 provides a ligand contact to (6R)-5,10-methylene-5,6,7,8-tetrahydrofolate. Position 278 (Ala278) interacts with (6R)-5,10-methylene-5,6,7,8-tetrahydrofolate.

Belongs to the thymidylate synthase family. Bacterial-type ThyA subfamily. In terms of assembly, homodimer.

The protein resides in the cytoplasm. The enzyme catalyses dUMP + (6R)-5,10-methylene-5,6,7,8-tetrahydrofolate = 7,8-dihydrofolate + dTMP. Its pathway is pyrimidine metabolism; dTTP biosynthesis. Its function is as follows. Catalyzes the reductive methylation of 2'-deoxyuridine-5'-monophosphate (dUMP) to 2'-deoxythymidine-5'-monophosphate (dTMP) while utilizing 5,10-methylenetetrahydrofolate (mTHF) as the methyl donor and reductant in the reaction, yielding dihydrofolate (DHF) as a by-product. This enzymatic reaction provides an intracellular de novo source of dTMP, an essential precursor for DNA biosynthesis. This Streptococcus pneumoniae (strain ATCC 700669 / Spain 23F-1) protein is Thymidylate synthase.